Reading from the N-terminus, the 427-residue chain is Glutamyl-tRNA reductase (427 aa).

Residues 49-52 (TCNR), Ser101, 106-108 (EPQ), and Gln112 contribute to the substrate site. Cys50 acts as the Nucleophile in catalysis. 181-186 (GAGETI) provides a ligand contact to NADP(+). A disordered region spans residues 407–427 (FPATPGYRHPPVRPDDADPAP). Over residues 418 to 427 (VRPDDADPAP) the composition is skewed to basic and acidic residues.

Belongs to the glutamyl-tRNA reductase family. In terms of assembly, homodimer.

The catalysed reaction is (S)-4-amino-5-oxopentanoate + tRNA(Glu) + NADP(+) = L-glutamyl-tRNA(Glu) + NADPH + H(+). Its pathway is porphyrin-containing compound metabolism; protoporphyrin-IX biosynthesis; 5-aminolevulinate from L-glutamyl-tRNA(Glu): step 1/2. Functionally, catalyzes the NADPH-dependent reduction of glutamyl-tRNA(Glu) to glutamate 1-semialdehyde (GSA). The sequence is that of Glutamyl-tRNA reductase from Stenotrophomonas maltophilia (strain K279a).